The sequence spans 582 residues: Potassium-transporting ATPase potassium-binding subunit (582 aa).

The next 10 helical transmembrane spans lie at 11 to 31 (AVFF…LAWV), 81 to 101 (LKAV…VLMF), 148 to 168 (FGIG…MPAF), 195 to 215 (LLPI…VQTI), 272 to 292 (VLTL…GAWV), 298 to 318 (GVAI…VAVV), 379 to 399 (ALGA…NGVG), 401 to 421 (GLLN…LMIG), 439 to 459 (VFVV…AAVV), and 551 to 571 (GLLI…ALVF).

It belongs to the KdpA family. As to quaternary structure, the system is composed of three essential subunits: KdpA, KdpB and KdpC.

It localises to the cell membrane. Part of the high-affinity ATP-driven potassium transport (or Kdp) system, which catalyzes the hydrolysis of ATP coupled with the electrogenic transport of potassium into the cytoplasm. This subunit binds the extracellular potassium ions and delivers the ions to the membrane domain of KdpB through an intramembrane tunnel. The polypeptide is Potassium-transporting ATPase potassium-binding subunit (Halobacterium salinarum (strain ATCC 700922 / JCM 11081 / NRC-1) (Halobacterium halobium)).